We begin with the raw amino-acid sequence, 402 residues long: Acyl-[acyl-carrier-protein] desaturase 3, chloroplastic (402 aa).

Disordered regions lie at residues 1-25 and 38-66; these read MSLTGCLPPRPPCSMRRRTSGGGAS and VGGIGNPTPRGKKPFAPWREVPPQVTHTL. The N-terminal 32 residues, 1 to 32, are a transit peptide targeting the chloroplast; the sequence is MSLTGCLPPRPPCSMRRRTSGGGASVSPVVVM. Fe cation-binding residues include Glu139, Glu178, His181, Glu231, Glu264, and His267.

It belongs to the fatty acid desaturase type 2 family. In terms of assembly, homodimer. The cofactor is Fe(2+).

The protein resides in the plastid. The protein localises to the chloroplast. The protein operates within lipid metabolism; fatty acid metabolism. In terms of biological role, introduces a cis double bond in the acyl chain of an acyl-[acyl-carrier protein]. The chain is Acyl-[acyl-carrier-protein] desaturase 3, chloroplastic from Oryza sativa subsp. indica (Rice).